Here is a 680-residue protein sequence, read N- to C-terminus: DNA ligase (680 aa).

Residues 44–48, 93–94, and E125 contribute to the NAD(+) site; these read DHVYD and SM. K127 acts as the N6-AMP-lysine intermediate in catalysis. NAD(+) contacts are provided by R148, E182, K298, and K322. Positions 416, 419, 434, and 439 each coordinate Zn(2+). Positions 600-680 constitute a BRCT domain; sequence NPDSEWNGRR…QFSQAMKEEQ (81 aa).

The protein belongs to the NAD-dependent DNA ligase family. LigA subfamily. Requires Mg(2+) as cofactor. The cofactor is Mn(2+).

The catalysed reaction is NAD(+) + (deoxyribonucleotide)n-3'-hydroxyl + 5'-phospho-(deoxyribonucleotide)m = (deoxyribonucleotide)n+m + AMP + beta-nicotinamide D-nucleotide.. In terms of biological role, DNA ligase that catalyzes the formation of phosphodiester linkages between 5'-phosphoryl and 3'-hydroxyl groups in double-stranded DNA using NAD as a coenzyme and as the energy source for the reaction. It is essential for DNA replication and repair of damaged DNA. The polypeptide is DNA ligase (Limosilactobacillus reuteri (strain DSM 20016) (Lactobacillus reuteri)).